Reading from the N-terminus, the 321-residue chain is Nod factor export ATP-binding protein I (321 aa).

The region spanning 17-247 is the ABC transporter domain; that stretch reads LSVEGLRKRY…EIGCDVVEVY (231 aa). 49-56 provides a ligand contact to ATP; the sequence is GPNGAGKT.

Belongs to the ABC transporter superfamily. Lipooligosaccharide exporter (TC 3.A.1.102) family. In terms of assembly, the complex is composed of two ATP-binding proteins (NodI) and two transmembrane proteins (NodJ).

The protein resides in the cell inner membrane. Its function is as follows. Part of the ABC transporter complex NodIJ involved in the export of the nodulation factors (Nod factors), the bacterial signal molecules that induce symbiosis and subsequent nodulation induction. Nod factors are LCO (lipo-chitin oligosaccharide), a modified beta-1,4-linked N-acetylglucosamine oligosaccharide. This subunit is responsible for energy coupling to the transport system. The sequence is that of Nod factor export ATP-binding protein I from Ralstonia nicotianae (strain ATCC BAA-1114 / GMI1000) (Ralstonia solanacearum).